The chain runs to 277 residues: Indole-3-glycerol phosphate synthase (277 aa).

This sequence belongs to the TrpC family.

It catalyses the reaction 1-(2-carboxyphenylamino)-1-deoxy-D-ribulose 5-phosphate + H(+) = (1S,2R)-1-C-(indol-3-yl)glycerol 3-phosphate + CO2 + H2O. The protein operates within amino-acid biosynthesis; L-tryptophan biosynthesis; L-tryptophan from chorismate: step 4/5. In Pseudomonas putida (strain GB-1), this protein is Indole-3-glycerol phosphate synthase.